Here is a 401-residue protein sequence, read N- to C-terminus: Tyrosine--tRNA ligase (401 aa).

Positions 41-50 match the 'HIGH' region motif; sequence PSRPDLHLGH. The 'KMSKS' region signature appears at 225–229; the sequence is KMSKS. Lysine 228 contributes to the ATP binding site. The S4 RNA-binding domain maps to 334–395; sequence KNIVDLLVEI…GKRKFYRISG (62 aa).

The protein belongs to the class-I aminoacyl-tRNA synthetase family. TyrS type 2 subfamily. In terms of assembly, homodimer.

Its subcellular location is the cytoplasm. It catalyses the reaction tRNA(Tyr) + L-tyrosine + ATP = L-tyrosyl-tRNA(Tyr) + AMP + diphosphate + H(+). In terms of biological role, catalyzes the attachment of tyrosine to tRNA(Tyr) in a two-step reaction: tyrosine is first activated by ATP to form Tyr-AMP and then transferred to the acceptor end of tRNA(Tyr). This Thermotoga maritima (strain ATCC 43589 / DSM 3109 / JCM 10099 / NBRC 100826 / MSB8) protein is Tyrosine--tRNA ligase.